The sequence spans 161 residues: Cyclic pyranopterin monophosphate synthase (161 aa).

Substrate is bound by residues L75–H77 and M113–E114. The active site involves D128.

This sequence belongs to the MoaC family. In terms of assembly, homohexamer; trimer of dimers.

It carries out the reaction (8S)-3',8-cyclo-7,8-dihydroguanosine 5'-triphosphate = cyclic pyranopterin phosphate + diphosphate. It participates in cofactor biosynthesis; molybdopterin biosynthesis. In terms of biological role, catalyzes the conversion of (8S)-3',8-cyclo-7,8-dihydroguanosine 5'-triphosphate to cyclic pyranopterin monophosphate (cPMP). This chain is Cyclic pyranopterin monophosphate synthase, found in Edwardsiella ictaluri (strain 93-146).